The following is a 356-amino-acid chain: Mannonate dehydratase 2 (356 aa).

Belongs to the mannonate dehydratase family. It depends on Fe(2+) as a cofactor. Mn(2+) serves as cofactor.

The catalysed reaction is D-mannonate = 2-dehydro-3-deoxy-D-gluconate + H2O. Its pathway is carbohydrate metabolism; pentose and glucuronate interconversion. In terms of biological role, catalyzes the dehydration of D-mannonate. This chain is Mannonate dehydratase 2, found in Bacillus licheniformis (strain ATCC 14580 / DSM 13 / JCM 2505 / CCUG 7422 / NBRC 12200 / NCIMB 9375 / NCTC 10341 / NRRL NRS-1264 / Gibson 46).